We begin with the raw amino-acid sequence, 626 residues long: Janus kinase and microtubule-interacting protein 1 (626 aa).

The tract at residues 1–25 (MSKKGRSKGEKPETETDSVQMANEE) is disordered. The segment at 1–365 (MSKKGRSKGE…KLKSLTRENV (365 aa)) is mediates association with microtubules. 2 coiled-coil regions span residues 13-255 (ETET…EAER) and 284-413 (ERDV…DDLS). Residues 365–626 (VEMKEKLSAQ…ILFEPKLKFV (262 aa)) are mediates interaction with TYK2 and GABBR1. Ser-382 is modified (phosphoserine). Residues 452–461 (ETLSETSYNT) show a composition bias toward polar residues. The interval 452–481 (ETLSETSYNTDRTDRTPATPEEDLDETTTR) is disordered. Thr-470 bears the Phosphothreonine mark. Positions 490–604 (QLTREYQALQ…EFRVLELEVR (115 aa)) form a coiled coil.

Belongs to the JAKMIP family. Homodimer. Interacts with JAK1 and TYK2. Forms a complex with GABBR1 and KIF5B/kinesin-1. In terms of processing, phosphorylated. In terms of tissue distribution, specifically expressed in brain and testis by spermatogonia, spermatocytes, spermatozoa and Sertoli cells (at protein level).

It is found in the cytoplasm. The protein resides in the cytoskeleton. The protein localises to the membrane. Associates with microtubules and may play a role in the microtubule-dependent transport of the GABA-B receptor. May play a role in JAK1 signaling and regulate microtubule cytoskeleton rearrangements. This is Janus kinase and microtubule-interacting protein 1 (Jakmip1) from Rattus norvegicus (Rat).